The sequence spans 488 residues: V-type proton ATPase subunit B 1 (488 aa).

This sequence belongs to the ATPase alpha/beta chains family. In terms of assembly, V-ATPase is a heteromultimeric enzyme composed of a peripheral catalytic V1 complex (main components: subunits A, B, C, D, E, and F) attached to an integral membrane V0 proton pore complex (main component: the proteolipid protein).

Functionally, non-catalytic subunit of the peripheral V1 complex of vacuolar ATPase. V-ATPase is responsible for acidifying a variety of intracellular compartments in eukaryotic cells. In Gossypium hirsutum (Upland cotton), this protein is V-type proton ATPase subunit B 1.